Reading from the N-terminus, the 507-residue chain is Probable cyclic di-GMP phosphodiesterase PdeG (507 aa).

2 helical membrane passes run 4–24 (TLIP…ILNI) and 217–237 (LIDK…AAAF). One can recognise an EAL domain in the interval 246 to 500 (SATPEEILRR…DLVKIILSKP (255 aa)).

Its subcellular location is the cell membrane. It catalyses the reaction 3',3'-c-di-GMP + H2O = 5'-phosphoguanylyl(3'-&gt;5')guanosine + H(+). Its function is as follows. Phosphodiesterase (PDE) that catalyzes the hydrolysis of cyclic-di-GMP (c-di-GMP) to 5'-pGpG. In Escherichia coli (strain K12), this protein is Probable cyclic di-GMP phosphodiesterase PdeG.